Here is a 348-residue protein sequence, read N- to C-terminus: MGLAELRELIEPEETDLRALAGREIAIDAFNALYQFLTTIMKDGRPLMDSRGRITSHLNGLLYRTVNLVEEGIKPVYVFDGEPPDLKRETLERRRERKEEAMEKLRRAKTKEEREKYARQVARLDESLVEDAKRLLDLMGIPWVQAPSEGEAQCAYMARCGDVWATGSQDYDSLLFGSPRLVRNITIVGKRKHPHTGEIIEVKPEIMRLEDVLDQLGLESREQLVDLAILLGTDYNPDGVPGIGPKRALQLIRKYGSLDELKDTDIWPKIERHLPVEPEKLRRLFLEPEVTDDYELDWDEPDEEGLVEFLVEERDFSEDRVRRAVERLKEALQELRKGGRQETLDAFF.

The segment at 1–98 (MGLAELRELI…ETLERRRERK (98 aa)) is N-domain. Residues Asp-28, Asp-80, Glu-149, Glu-151, Asp-170, Asp-172, and Asp-234 each contribute to the Mg(2+) site. Residues 113-256 (EREKYARQVA…RALQLIRKYG (144 aa)) are I-domain. Residues 340-348 (RQETLDAFF) are interaction with PCNA.

This sequence belongs to the XPG/RAD2 endonuclease family. FEN1 subfamily. Interacts with PCNA. PCNA stimulates the nuclease activity without altering cleavage specificity. Mg(2+) is required as a cofactor.

Its function is as follows. Structure-specific nuclease with 5'-flap endonuclease and 5'-3' exonuclease activities involved in DNA replication and repair. During DNA replication, cleaves the 5'-overhanging flap structure that is generated by displacement synthesis when DNA polymerase encounters the 5'-end of a downstream Okazaki fragment. Binds the unpaired 3'-DNA end and kinks the DNA to facilitate 5' cleavage specificity. Cleaves one nucleotide into the double-stranded DNA from the junction in flap DNA, leaving a nick for ligation. Also involved in the base excision repair (BER) pathway. Acts as a genome stabilization factor that prevents flaps from equilibrating into structures that lead to duplications and deletions. Also possesses 5'-3' exonuclease activity on nicked or gapped double-stranded DNA. The sequence is that of Flap endonuclease 1 from Methanopyrus kandleri (strain AV19 / DSM 6324 / JCM 9639 / NBRC 100938).